Consider the following 455-residue polypeptide: UDP-glycosyltransferase 2 (455 aa).

This sequence belongs to the UDP-glycosyltransferase family.

It catalyses the reaction exophillate + UDP-alpha-D-galactose = phaeomoniecin D + UDP + H(+). It functions in the pathway secondary metabolite biosynthesis. Functionally, catalyzes the second glycosylation step during phaeomoniecin D biosynthesis, the further O-galactosylation of exophillic acid (produced by the O-glycosyltransferase OGT1) to yield the 4-O-beta-D-galactoside phaeomoniecin D. In Phaeomoniella chlamydospora (Phaeoacremonium chlamydosporum), this protein is UDP-glycosyltransferase 2.